Reading from the N-terminus, the 272-residue chain is Proteasome assembly chaperone 1 (272 aa).

It belongs to the PSMG1 family. As to quaternary structure, forms a heterodimer with psmg2.

Functionally, chaperone protein which promotes assembly of the 20S proteasome as part of a heterodimer with psmg2. This is Proteasome assembly chaperone 1 (psmG1) from Dictyostelium discoideum (Social amoeba).